Consider the following 134-residue polypeptide: Arsenate reductase (134 aa).

Residues cysteine 11, cysteine 83, and cysteine 90 each act as nucleophile in the active site. Intrachain disulfides connect cysteine 11–cysteine 83 and cysteine 83–cysteine 90.

Belongs to the low molecular weight phosphotyrosine protein phosphatase family. Thioredoxin-coupled ArsC subfamily.

The protein resides in the cytoplasm. The catalysed reaction is arsenate + [thioredoxin]-dithiol + H(+) = arsenite + [thioredoxin]-disulfide + H2O. Catalyzes the reduction of arsenate [As(V)] to arsenite [As(III)]. The protein is Arsenate reductase of Brevibacillus brevis (strain 47 / JCM 6285 / NBRC 100599).